We begin with the raw amino-acid sequence, 453 residues long: UDP-N-acetylmuramoylalanine--D-glutamate ligase (453 aa).

119–125 (GSNGKTT) is an ATP binding site.

It belongs to the MurCDEF family.

Its subcellular location is the cytoplasm. The enzyme catalyses UDP-N-acetyl-alpha-D-muramoyl-L-alanine + D-glutamate + ATP = UDP-N-acetyl-alpha-D-muramoyl-L-alanyl-D-glutamate + ADP + phosphate + H(+). It participates in cell wall biogenesis; peptidoglycan biosynthesis. Its function is as follows. Cell wall formation. Catalyzes the addition of glutamate to the nucleotide precursor UDP-N-acetylmuramoyl-L-alanine (UMA). This Streptococcus uberis (strain ATCC BAA-854 / 0140J) protein is UDP-N-acetylmuramoylalanine--D-glutamate ligase.